Consider the following 540-residue polypeptide: MTAIVEPSVTTGPIAGSSKVYRELDGVPGARVPFRRVHLSTGDHFDLYDTSGPYTDPDATIDLTAGLPARPGRVRDRGTQLQRARAGEITAEMAFIAAREGMPAELVRDEVARGRAVIPANHNHPEIEPMIIGKAFATKVNANIGNSAVTSSIAEEVDKMVWATRWGADTIMDLSTGKNIHETREWILRNSPVPVGTVPIYQALEKVKGDPTLLTWEIYRDTVIEQCEQGVDYMTVHAGVLLRYVPLTAKRVTGIVSRGGSIMAAWCLAHHRESFLYTNFDELCEIFARYDVTFSLGDGLRPGSIADANDAAQFAELRTLGELTKIAKSHGVQVMIEGPGHVPMHKIVENVRLEEEWCEEAPFYTLGPLATDIAPAYDHITSAIGAAIIAQAGTAMLCYVTPKEHLGLPDRKDVKDGVIAYKIAAHAGDLAKGHPHAQERDNALSQARFEFRWNDQFALSLDPDTAREYHDETLPAEPAKTAHFCSMCGPKFCSMRITQDVRDYAAKHGLDSEEAIEAAMADKSREFAEHGNRVYLPLAQ.

Substrate is bound by residues asparagine 143, methionine 172, tyrosine 201, histidine 237, 257-259 (SRG), 298-301 (DGLR), and glutamate 337. Histidine 341 is a binding site for Zn(2+). Tyrosine 364 lines the substrate pocket. Zn(2+) is bound at residue histidine 405. Residues cysteine 485, cysteine 488, and cysteine 493 each coordinate [4Fe-4S] cluster.

The protein belongs to the ThiC family. [4Fe-4S] cluster is required as a cofactor.

It catalyses the reaction 5-amino-1-(5-phospho-beta-D-ribosyl)imidazole + S-adenosyl-L-methionine = 4-amino-2-methyl-5-(phosphooxymethyl)pyrimidine + CO + 5'-deoxyadenosine + formate + L-methionine + 3 H(+). The protein operates within cofactor biosynthesis; thiamine diphosphate biosynthesis. In terms of biological role, catalyzes the synthesis of the hydroxymethylpyrimidine phosphate (HMP-P) moiety of thiamine from aminoimidazole ribotide (AIR) in a radical S-adenosyl-L-methionine (SAM)-dependent reaction. This chain is Phosphomethylpyrimidine synthase, found in Mycobacterium avium (strain 104).